The chain runs to 528 residues: (R)-citramalate synthase (528 aa).

The Pyruvate carboxyltransferase domain occupies 5–271; sequence VYIYDTTLRD…IPQENLKKLT (267 aa).

This sequence belongs to the alpha-IPM synthase/homocitrate synthase family.

It catalyses the reaction pyruvate + acetyl-CoA + H2O = (3R)-citramalate + CoA + H(+). It functions in the pathway amino-acid biosynthesis; L-isoleucine biosynthesis; 2-oxobutanoate from pyruvate: step 1/3. Functionally, catalyzes the condensation of pyruvate and acetyl-coenzyme A to form (R)-citramalate. This chain is (R)-citramalate synthase, found in Aquifex aeolicus (strain VF5).